The sequence spans 569 residues: MIDDQVIAAARGDIPCDLVLKNAQIVNVFSGEIQKGDVAVQGGKVAALDSRDAKITVDLEGRFLTPGLIDAHVHIESSMVSPYQYARTVILHGTTAVIADPHEIANVMGVDGVSYMIQAAEGAPVGIFYAVPSCVPATHLETAGASLETKDILPFLEHPKIVGLAEMMNFPGVIYRDPEVLAKMNAAKSHRKTVDGHAPGLSGADLQAYLAAGAASDHECTTPEEALEKLASGMRIMIRQGTGAKNLNDLLPIVTEQNSRRIMFCSDDRHPYDLLEKGHINIMVARSIRQGVDPVTAIRMASLNTAEYFGLRDRGGIAPGMRADLLVVPDLVDFHVQDVYSGGVKVVEDGCGLPSPMDPPPRPQTSSMNVDVDGLDFTIKAGSGKARIIKLIPDQVVTAAMTGDVLQKNGEALSDPGNDILKIAVVERHKGTGNIGLGFVNGFGLQKGALASSVAHDSHNIIVVGVDDADMKAAVKAVADMGGGLAAAAGGKALSVCPLPIAGLMSDQPMEQVRRQLDILMQTAKELGAKAEDPFMSLSFLALPVIPELKITDKGLVDVNLFNFVSLFE.

Belongs to the metallo-dependent hydrolases superfamily. Adenine deaminase family. It depends on Mn(2+) as a cofactor.

It carries out the reaction adenine + H2O + H(+) = hypoxanthine + NH4(+). The protein is Adenine deaminase of Desulfatibacillum aliphaticivorans.